A 670-amino-acid chain; its full sequence is Transketolase, plasmid (670 aa).

A substrate-binding site is contributed by H32. Thiamine diphosphate is bound by residues H72 and 120–122 (GPL). Residue D161 participates in Mg(2+) binding. Thiamine diphosphate-binding residues include G162 and N191. The Mg(2+) site is built by N191 and I193. Substrate is bound by residues H267, R364, and S391. Position 267 (H267) interacts with thiamine diphosphate. E417 acts as the Proton donor in catalysis. F443 serves as a coordination point for thiamine diphosphate. Substrate-binding residues include H467, D475, and R526.

The protein belongs to the transketolase family. Homodimer. Requires Mg(2+) as cofactor. It depends on Ca(2+) as a cofactor. Mn(2+) serves as cofactor. Co(2+) is required as a cofactor. The cofactor is thiamine diphosphate.

It catalyses the reaction D-sedoheptulose 7-phosphate + D-glyceraldehyde 3-phosphate = aldehydo-D-ribose 5-phosphate + D-xylulose 5-phosphate. The protein operates within carbohydrate biosynthesis; Calvin cycle. Its function is as follows. Catalyzes the transfer of a two-carbon ketol group from a ketose donor to an aldose acceptor, via a covalent intermediate with the cofactor thiamine pyrophosphate. In Cupriavidus necator (strain ATCC 17699 / DSM 428 / KCTC 22496 / NCIMB 10442 / H16 / Stanier 337) (Ralstonia eutropha), this protein is Transketolase, plasmid (cbbTP).